A 437-amino-acid polypeptide reads, in one-letter code: UDP-N-acetylmuramate--L-alanine ligase (437 aa).

108–114 (GAHGKTS) is a binding site for ATP.

This sequence belongs to the MurCDEF family.

The protein localises to the cytoplasm. It catalyses the reaction UDP-N-acetyl-alpha-D-muramate + L-alanine + ATP = UDP-N-acetyl-alpha-D-muramoyl-L-alanine + ADP + phosphate + H(+). It functions in the pathway cell wall biogenesis; peptidoglycan biosynthesis. Its function is as follows. Cell wall formation. The polypeptide is UDP-N-acetylmuramate--L-alanine ligase (Staphylococcus aureus (strain JH9)).